We begin with the raw amino-acid sequence, 724 residues long: Solute carrier organic anion transporter family member 4C1 (724 aa).

Residues Met1 to Gly105 lie on the Cytoplasmic side of the membrane. Phosphoserine occurs at positions 15, 16, 24, 26, and 28. Residues Ile30–Ser71 form a disordered region. Low complexity predominate over residues Ser44–Glu60. The chain crosses the membrane as a helical span at residues Gly106–Val126. Over Asn127–Gly145 the chain is Extracellular. Residues Leu146–Gly166 form a helical membrane-spanning segment. Topologically, residues Glu167–Pro172 are cytoplasmic. The chain crosses the membrane as a helical span at residues Arg173–Gly197. At Glu198 to Ser223 the chain is on the extracellular side. The chain crosses the membrane as a helical span at residues Ser224–Leu254. The Cytoplasmic portion of the chain corresponds to Asp255–Ser274. Residues Ile275–Val295 traverse the membrane as a helical segment. At Ala296–Leu311 the chain is on the extracellular side. The helical transmembrane segment at Gly312–Pro336 threads the bilayer. The Cytoplasmic segment spans residues Lys337 to Asn377. The chain crosses the membrane as a helical span at residues Leu378–Thr399. Residues Gly400–Phe419 are Extracellular-facing. A helical transmembrane segment spans residues Ala420–Val443. The Cytoplasmic portion of the chain corresponds to Ser444–Arg447. Residues Met448–Phe471 traverse the membrane as a helical segment. Over Met472–Phe580 the chain is Extracellular. The 55-residue stretch at Gly495 to Glu549 folds into the Kazal-like domain. Cystine bridges form between Cys501-Cys530, Cys507-Cys526, and Cys516-Cys547. Residues Leu581–Leu603 form a helical membrane-spanning segment. The Cytoplasmic segment spans residues Arg604–Ser612. A helical membrane pass occupies residues Leu613–Ile638. The Extracellular portion of the chain corresponds to Asp639–Ser672. The chain crosses the membrane as a helical span at residues Val673 to Tyr690. The Cytoplasmic portion of the chain corresponds to Lys691–Gly724.

It belongs to the organo anion transporter (TC 2.A.60) family. As to expression, predominantly expressed in kidney but also weakly expressed in both fetal liver and kidney.

Its subcellular location is the basolateral cell membrane. It catalyses the reaction estrone 3-sulfate(out) = estrone 3-sulfate(in). It carries out the reaction L-thyroxine(out) = L-thyroxine(in). The catalysed reaction is 3,3',5-triiodo-L-thyronine(out) = 3,3',5-triiodo-L-thyronine(in). The enzyme catalyses chenodeoxycholate(out) = chenodeoxycholate(in). It catalyses the reaction glycocholate(out) = glycocholate(in). It carries out the reaction L-homoarginine(in) = L-homoarginine(out). The catalysed reaction is L-arginine(in) = L-arginine(out). The enzyme catalyses N(omega),N(omega)-dimethyl-L-arginine(out) = N(omega),N(omega)-dimethyl-L-arginine(in). In terms of biological role, mediates the transport of organic anions such as steroids (estrone 3-sulfate, chenodeoxycholate, glycocholate) and thyroid hormones (3,3',5-triiodo-L-thyronine (T3), L-thyroxine (T4)), in the kidney. Capable of transporting cAMP and pharmacological substances such as digoxin, ouabain and methotrexate. Transport is independent of sodium, chloride ion, and ATP. Transport activity is stimulated by an acidic extracellular environment due to increased substrate affinity to the transporter. The driving force for this transport activity is currently not known. The role of hydrogencarbonate (HCO3(-), bicarbonate) as the probable counteranion that exchanges for organic anions is still not well defined. Functions as an uptake transporter at the apical membrane, suggesting a role in renal reabsorption. Involved in the renal secretion of the uremic toxin ADMA (N(omega),N(omega)-dimethyl-L-arginine or asymmetrical dimethylarginine), which is associated to cardiovascular events and mortality, and the structurally related amino acids L-arginine and L-homoarginine (a cardioprotective biomarker). Can act bidirectionally, suggesting a dual protective role of this transport protein; exporting L-homoarginine after being synthesized in proximal tubule cells, and mediating uptake of ADMA from the blood into proximal tubule cells where it is degraded by the enzyme dimethylarginine dimethylaminohydrolase 1 (DDAH1). May be involved in sperm maturation by enabling directed movement of organic anions and compounds within or between cells. This ion-transporting process is important to maintain the strict epididymal homeostasis necessary for sperm maturation. May have a role in secretory functions since seminal vesicle epithelial cells are assumed to secrete proteins involved in decapacitation by modifying surface proteins to facilitate the acquisition of the ability to fertilize the egg. The chain is Solute carrier organic anion transporter family member 4C1 from Homo sapiens (Human).